A 955-amino-acid polypeptide reads, in one-letter code: Probable trehalose monomycolate exporter MmpL3 (955 aa).

The Cytoplasmic portion of the chain corresponds to 1-13 (MFAWWGRTVYRYR). A helical membrane pass occupies residues 14–34 (FIVIGITVALCLCGGVFGLSL). Residues 35–190 (GKHVTQSGFY…TIATDQRRME (156 aa)) are Periplasmic-facing. Residue 40–44 (QSGFY) coordinates a 1,2-diacylglycero-3-phosphoethanolamine. Residues 191 to 213 (VLALPLVAVVLFLVFGGVIAACL) traverse the membrane as a helical segment. At 214-219 (PVMVGG) the chain is on the cytoplasmic side. The helical transmembrane segment at 220–236 (LSIAGALGILRFIALFG) threads the bilayer. The Periplasmic segment spans residues 237–244 (PVHFFAQP). The chain crosses the membrane as a helical span at residues 245–262 (VVSLIGLGIAVDYGLFVV). Over 263–291 (SRFREEIAEGYDTEAAVRRTVMTAGRTVT) the chain is Cytoplasmic. A helical membrane pass occupies residues 292-312 (FSAVLIAASGASLLLLPQGFV). The Periplasmic segment spans residues 313–319 (KSLTYAL). Residues 320-340 (IAAVTLAALLSITLLPACLAI) traverse the membrane as a helical segment. The Cytoplasmic segment spans residues 341–401 (LAKHVDALGV…KLVNFVMKRP (61 aa)). The helical transmembrane segment at 402-422 (LVFAIPIVIGMILLVIPLGNL) threads the bilayer. Residues 423 to 567 (SFGGMSEKYL…HSLVAQAPLM (145 aa)) are Periplasmic-facing. Residues 568–588 (VIMLITTTMLLMFLAFGSFVL) form a helical membrane-spanning segment. Residues 589–591 (PIK) are Cytoplasmic-facing. The chain crosses the membrane as a helical span at residues 592 to 612 (AAVMSALTLGSTMGILTWIFV). Residues 613–621 (DGHLSKWLN) lie on the Periplasmic side of the membrane. The chain crosses the membrane as a helical span at residues 622–642 (FTPTPLMVVIIALVVAVGYGL). The Cytoplasmic segment spans residues 643–678 (ATDYEVFLVSRMVEARAESMSTQEAVRIGTASTGRL). Residues 679 to 699 (ITAAALVLAVVAGSFVFSDLV) form a helical membrane-spanning segment. Residues 700–703 (MMKY) are Periplasmic-facing. Residues 704-724 (LAFGLMAALLLDATVVRMFLV) traverse the membrane as a helical segment. The Cytoplasmic segment spans residues 725–955 (PSVMKLLGDD…QDLLRREGRL (231 aa)). The segment at 759 to 955 (ERRRPTVSGR…QDLLRREGRL (197 aa)) is disordered. 2 stretches are compositionally biased toward polar residues: residues 821–860 (GAST…SQGV) and 890–902 (NRSS…TAEP).

It belongs to the resistance-nodulation-cell division (RND) (TC 2.A.6) family. MmpL subfamily.

The protein localises to the cell inner membrane. It is found in the cell septum. The protein resides in the cell tip. Functionally, transports trehalose monomycolate (TMM) to the cell wall. Flips TMM across the inner membrane. Membrane potential is not required for this function. Transports probably phosphatidylethanolamine (PE) as well. Contributes to membrane potential, cell wall composition, antibiotic susceptibility and fitness. The chain is Probable trehalose monomycolate exporter MmpL3 (mmpL3) from Mycobacterium leprae (strain TN).